The following is a 207-amino-acid chain: ATP-dependent Clp protease proteolytic subunit (207 aa).

The Nucleophile role is filled by serine 111. Histidine 136 is an active-site residue.

This sequence belongs to the peptidase S14 family. As to quaternary structure, fourteen ClpP subunits assemble into 2 heptameric rings which stack back to back to give a disk-like structure with a central cavity, resembling the structure of eukaryotic proteasomes.

It localises to the cytoplasm. The enzyme catalyses Hydrolysis of proteins to small peptides in the presence of ATP and magnesium. alpha-casein is the usual test substrate. In the absence of ATP, only oligopeptides shorter than five residues are hydrolyzed (such as succinyl-Leu-Tyr-|-NHMec, and Leu-Tyr-Leu-|-Tyr-Trp, in which cleavage of the -Tyr-|-Leu- and -Tyr-|-Trp bonds also occurs).. In terms of biological role, cleaves peptides in various proteins in a process that requires ATP hydrolysis. Has a chymotrypsin-like activity. Plays a major role in the degradation of misfolded proteins. The chain is ATP-dependent Clp protease proteolytic subunit from Psychromonas ingrahamii (strain DSM 17664 / CCUG 51855 / 37).